The primary structure comprises 445 residues: Tubby-like F-box protein 10 (445 aa).

One can recognise an F-box domain in the interval 57-112; sequence SRWANLPPELLFDVIKRLEESESNWPARKHVVACASVCRSWRAMCQEIVLGPEICG. Positions 382-398 are enriched in low complexity; it reads PQPQGTGAAAAPTSAPA. Positions 382 to 401 are disordered; the sequence is PQPQGTGAAAAPTSAPAHPE.

Belongs to the TUB family. As to quaternary structure, part of a SCF (ASK-cullin-F-box) protein ligase complex. Interacts with SKP1A/ASK1. Ubiquitous.

Its subcellular location is the nucleus. It participates in protein modification; protein ubiquitination. In terms of biological role, component of SCF(ASK-cullin-F-box) E3 ubiquitin ligase complexes, which may mediate the ubiquitination and subsequent proteasomal degradation of target proteins. In Arabidopsis thaliana (Mouse-ear cress), this protein is Tubby-like F-box protein 10.